Consider the following 178-residue polypeptide: MAELLTLARPYAKAAFAYASEQGATDNWSNALQVLSAAVQDEAFSAYLNRPELTPAEQVKLFAKVLGEDQSQAVSNFLTLLADNDRLVLLPEIAAEYEQLKSQNNNNVDVVIESAFPLTAEQEQLLKSALEKRFNSTVTVSVEVKPELIAGVVIRAGDQVIDDSALNKLEKMRTRLLA.

The protein belongs to the ATPase delta chain family. As to quaternary structure, F-type ATPases have 2 components, F(1) - the catalytic core - and F(0) - the membrane proton channel. F(1) has five subunits: alpha(3), beta(3), gamma(1), delta(1), epsilon(1). F(0) has three main subunits: a(1), b(2) and c(10-14). The alpha and beta chains form an alternating ring which encloses part of the gamma chain. F(1) is attached to F(0) by a central stalk formed by the gamma and epsilon chains, while a peripheral stalk is formed by the delta and b chains.

Its subcellular location is the cell inner membrane. F(1)F(0) ATP synthase produces ATP from ADP in the presence of a proton or sodium gradient. F-type ATPases consist of two structural domains, F(1) containing the extramembraneous catalytic core and F(0) containing the membrane proton channel, linked together by a central stalk and a peripheral stalk. During catalysis, ATP synthesis in the catalytic domain of F(1) is coupled via a rotary mechanism of the central stalk subunits to proton translocation. Its function is as follows. This protein is part of the stalk that links CF(0) to CF(1). It either transmits conformational changes from CF(0) to CF(1) or is implicated in proton conduction. This is ATP synthase subunit delta from Acinetobacter baumannii (strain AB307-0294).